The chain runs to 436 residues: MFDSTLNPLWQRYILAVQEEVKPALGCTEPISLALAAAVAAAELEGPVERVEAWVSPNLMKNGLGVTVPGTGMVGLPIAAALGALGGNANAGLEVLKDATAQAIADAKALLAAGKVSVKIQEPCNEILFSRAKVWNGEKWACVTIVGGHTNIVHIETHNGVVFTQQACVAEGEQESPLTVLSRTTLAEILKFVNEVPFAAIRFILDSAKLNCALSQEGLSGKWGLHIGATLEKQCERGLLAKDLSSSIVIRTSAASDARMGGATLPAMSNSGSGNQGITATMPVVVVAEHFGADDERLARALMLSHLSAIYIHNQLPRLSALCAATTAAMGAAAGMAWLVDGRYETISMAISSMIGDVSGMICDGASNSCAMKVSTSASAAWKAVLMALDDTAVTGNEGIVAHDVEQSIANLCALASHSMQQTDRQIIEIMASKAR.

It belongs to the UPF0597 family.

This is UPF0597 protein YhaM from Escherichia coli O139:H28 (strain E24377A / ETEC).